The sequence spans 389 residues: Lipid-A-disaccharide synthase (389 aa).

It belongs to the LpxB family.

It catalyses the reaction a lipid X + a UDP-2-N,3-O-bis[(3R)-3-hydroxyacyl]-alpha-D-glucosamine = a lipid A disaccharide + UDP + H(+). It functions in the pathway bacterial outer membrane biogenesis; LPS lipid A biosynthesis. Condensation of UDP-2,3-diacylglucosamine and 2,3-diacylglucosamine-1-phosphate to form lipid A disaccharide, a precursor of lipid A, a phosphorylated glycolipid that anchors the lipopolysaccharide to the outer membrane of the cell. This chain is Lipid-A-disaccharide synthase, found in Burkholderia ambifaria (strain MC40-6).